The primary structure comprises 630 residues: Pro-interleukin-16 (630 aa).

Disordered stretches follow at residues 30–268 and 316–343; these read ENPG…FPLT and PKEG…ASDT. Over residues 129 to 143 the composition is skewed to low complexity; it reads IRASSSSSIKQRISS. The residue at position 220 (serine 220) is a Phosphoserine. Positions 321 to 343 are enriched in polar residues; that stretch reads SPTSSSNEDSAANGSAETSASDT. The tract at residues 404-500 is interaction with PPP1R12A, PPP1R12B and PPP1R12C; the sequence is KQLDSIHVTI…IVTRKLTAES (97 aa). PDZ domains lie at 410–495 and 532–617; these read HVTI…VTRK and TVTL…IRRK.

In terms of assembly, homotetramer. Pro-interleukin-16 interacts (via PDZ 2 domain) with PPP1R12A, PPP1R12B and PPP1R12C. Pro-interleukin-16 interacts with GRIN2A. Pro-interleukin-16 interacts with GABPB1. Pro-interleukin-16 interacts (via PDZ 3 domain) with HDAC3.

It localises to the secreted. The protein resides in the cytoplasm. It is found in the nucleus. Functionally, interleukin-16 stimulates a migratory response in CD4+ lymphocytes, monocytes, and eosinophils. Primes CD4+ T-cells for IL-2 and IL-15 responsiveness. Also induces T-lymphocyte expression of interleukin 2 receptor. Ligand for CD4. Pro-interleukin-16 is involved in cell cycle progression in T-cells. Appears to be involved in transcriptional regulation of SKP2 and is probably part of a transcriptional repression complex on the core promoter of the SKP2 gene. May act as a scaffold for GABPB1 (the DNA-binding subunit the GABP transcription factor complex) and HDAC3 thus maintaining transcriptional repression and blocking cell cycle progression in resting T-cells. This chain is Pro-interleukin-16 (IL16), found in Macaca fascicularis (Crab-eating macaque).